Here is a 207-residue protein sequence, read N- to C-terminus: Protein N-terminal glutamine amidohydrolase (207 aa).

Residues C30, H83, and D99 contribute to the active site.

The protein belongs to the NTAQ1 family. As to quaternary structure, monomer.

The protein resides in the cytoplasm. The protein localises to the cytosol. It is found in the nucleus. The catalysed reaction is N-terminal L-glutaminyl-[protein] + H2O = N-terminal L-glutamyl-[protein] + NH4(+). In terms of biological role, mediates the side-chain deamidation of N-terminal glutamine residues to glutamate, an important step in N-end rule pathway of protein degradation. Conversion of the resulting N-terminal glutamine to glutamate renders the protein susceptible to arginylation, polyubiquitination and degradation as specified by the N-end rule. Does not act on substrates with internal or C-terminal glutamine and does not act on non-glutamine residues in any position. Does not deaminate acetylated N-terminal glutamine. With the exception of proline, all tested second-position residues on substrate peptides do not greatly influence the activity. In contrast, a proline at position 2, virtually abolishes deamidation of N-terminal glutamine. The protein is Protein N-terminal glutamine amidohydrolase (NTAQ1) of Bos taurus (Bovine).